The sequence spans 284 residues: 2-dehydro-3-deoxyphosphooctonate aldolase (284 aa).

Belongs to the KdsA family.

It localises to the cytoplasm. It catalyses the reaction D-arabinose 5-phosphate + phosphoenolpyruvate + H2O = 3-deoxy-alpha-D-manno-2-octulosonate-8-phosphate + phosphate. Its pathway is carbohydrate biosynthesis; 3-deoxy-D-manno-octulosonate biosynthesis; 3-deoxy-D-manno-octulosonate from D-ribulose 5-phosphate: step 2/3. It participates in bacterial outer membrane biogenesis; lipopolysaccharide biosynthesis. In Burkholderia mallei (strain NCTC 10247), this protein is 2-dehydro-3-deoxyphosphooctonate aldolase.